A 760-amino-acid polypeptide reads, in one-letter code: ATP-dependent zinc metalloprotease FtsH (760 aa).

Over 1-5 (MNRKN) the chain is Cytoplasmic. Residues 6–26 (VTRTITAIAVVVLLGWSFFYF) traverse the membrane as a helical segment. The Extracellular portion of the chain corresponds to 27–110 (SDDTRGYKPV…KVSTVVNQGS (84 aa)). Residues 111 to 131 (ILGELLVYVLPLLLLVGLFVM) form a helical membrane-spanning segment. The Cytoplasmic segment spans residues 132-760 (FSRMQGGARM…EVSRTKPAHG (629 aa)). Residue 203–210 (GPPGTGKT) coordinates ATP. A Zn(2+)-binding site is contributed by His-425. Residue Glu-426 is part of the active site. Zn(2+)-binding residues include His-429 and Asp-501. Positions 616–760 (DFGGRIPSDK…EVSRTKPAHG (145 aa)) are disordered. Residues 650 to 669 (AFKAAIAQATQAAEAARSDA) show a composition bias toward low complexity. Over residues 740–750 (GSDESSAEQDD) the composition is skewed to acidic residues.

It in the central section; belongs to the AAA ATPase family. This sequence in the C-terminal section; belongs to the peptidase M41 family. In terms of assembly, homohexamer. It depends on Zn(2+) as a cofactor.

The protein resides in the cell membrane. In terms of biological role, acts as a processive, ATP-dependent zinc metallopeptidase for both cytoplasmic and membrane proteins. Plays a role in the quality control of integral membrane proteins. This Mycobacterium tuberculosis (strain CDC 1551 / Oshkosh) protein is ATP-dependent zinc metalloprotease FtsH.